A 211-amino-acid chain; its full sequence is Tudor-interacting repair regulator protein (211 aa).

Glycyl lysine isopeptide (Lys-Gly) (interchain with G-Cter in ubiquitin) cross-links involve residues Lys-10 and Lys-151. The interaction with PXN stretch occupies residues 118-205 (TLEQLHAVEI…TEKQKKALEK (88 aa)).

The protein belongs to the Nudix hydrolase family. TIRR subfamily. In terms of assembly, homodimer. Interacts with TP53BP1 (via the Tudor-like domain); interaction is abolished following DNA damage and TP53BP1 phosphorylation by ATM. Interacts (via the cytoplasmic part) with SDC4. Interacts with TGFB1I1 and PXN.

The protein resides in the nucleus. Key regulator of TP53BP1 required to stabilize TP53BP1 and regulate its recruitment to chromatin. In absence of DNA damage, interacts with the tandem Tudor-like domain of TP53BP1, masking the region that binds histone H4 dimethylated at 'Lys-20' (H4K20me2), thereby preventing TP53BP1 recruitment to chromatin and maintaining TP53BP1 localization to the nucleus. Following DNA damage, ATM-induced phosphorylation of TP53BP1 and subsequent recruitment of RIF1 leads to dissociate NUDT16L1/TIRR from TP53BP1, unmasking the tandem Tudor-like domain and allowing recruitment of TP53BP1 to DNA double strand breaks (DSBs). Binds U8 snoRNA. This is Tudor-interacting repair regulator protein from Homo sapiens (Human).